Here is a 474-residue protein sequence, read N- to C-terminus: Probable diacyglycerol O-acyltransferase Tgs4 (474 aa).

His135 serves as the catalytic Proton acceptor.

Belongs to the long-chain O-acyltransferase family.

It catalyses the reaction an acyl-CoA + a 1,2-diacyl-sn-glycerol = a triacyl-sn-glycerol + CoA. It functions in the pathway glycerolipid metabolism; triacylglycerol biosynthesis. Required for maintaining the appropriate mycolic acid composition and permeability of the envelope on its exposure to acidic pH. This Mycobacterium tuberculosis (strain CDC 1551 / Oshkosh) protein is Probable diacyglycerol O-acyltransferase Tgs4 (tgs4).